A 582-amino-acid polypeptide reads, in one-letter code: TBCC domain-containing protein 1 (582 aa).

Residues 140–153 (EWPSPRSRSPSSSS) are compositionally biased toward low complexity. A disordered region spans residues 140–159 (EWPSPRSRSPSSSSSERDAK). Positions 305–451 (PPGSRLVLMS…LWNQPLLFGV (147 aa)) constitute a C-CAP/cofactor C-like domain. The span at 547-558 (SLLPPTITPSSS) shows a compositional bias: low complexity. The tract at residues 547–582 (SLLPPTITPSSSAEHWSSNQNTLKEQTHEQPTGTVC) is disordered. Polar residues predominate over residues 559 to 582 (AEHWSSNQNTLKEQTHEQPTGTVC).

It belongs to the TBCC family.

Its subcellular location is the cytoplasm. The protein resides in the cytoskeleton. It localises to the microtubule organizing center. It is found in the centrosome. The protein localises to the spindle pole. Its function is as follows. May play a role in the regulation of centrosome and Golgi apparatus positioning. This Danio rerio (Zebrafish) protein is TBCC domain-containing protein 1 (tbccd1).